The primary structure comprises 159 residues: 2-C-methyl-D-erythritol 2,4-cyclodiphosphate synthase (159 aa).

A divalent metal cation is bound by residues aspartate 8 and histidine 10. 4-CDP-2-C-methyl-D-erythritol 2-phosphate-binding positions include 8-10 (DVH) and 34-35 (HS). A divalent metal cation is bound at residue histidine 42. 4-CDP-2-C-methyl-D-erythritol 2-phosphate-binding positions include 56–58 (DIG), 61–65 (FPDTD), 100–106 (AQAPKML), 132–135 (TTTE), phenylalanine 139, and arginine 142.

It belongs to the IspF family. In terms of assembly, homotrimer. The cofactor is a divalent metal cation.

It carries out the reaction 4-CDP-2-C-methyl-D-erythritol 2-phosphate = 2-C-methyl-D-erythritol 2,4-cyclic diphosphate + CMP. It functions in the pathway isoprenoid biosynthesis; isopentenyl diphosphate biosynthesis via DXP pathway; isopentenyl diphosphate from 1-deoxy-D-xylulose 5-phosphate: step 4/6. Involved in the biosynthesis of isopentenyl diphosphate (IPP) and dimethylallyl diphosphate (DMAPP), two major building blocks of isoprenoid compounds. Catalyzes the conversion of 4-diphosphocytidyl-2-C-methyl-D-erythritol 2-phosphate (CDP-ME2P) to 2-C-methyl-D-erythritol 2,4-cyclodiphosphate (ME-CPP) with a corresponding release of cytidine 5-monophosphate (CMP). This Salmonella arizonae (strain ATCC BAA-731 / CDC346-86 / RSK2980) protein is 2-C-methyl-D-erythritol 2,4-cyclodiphosphate synthase.